Here is a 202-residue protein sequence, read N- to C-terminus: Nigerythrin (202 aa).

In terms of domain architecture, Ferritin-like diiron spans 23 to 168; it reads KTAVGSTLEN…AYNDIDAPDD (146 aa). Positions 40, 73, 115, 118, 149, 152, 174, 177, 189, and 192 each coordinate Fe cation. One can recognise a Rubredoxin-like domain in the interval 169-202; it reads DKFHLCPICGYIHKGEDFEKCPICFRPKDTFTAY.

Homodimer. May possess two rubredoxin-like centers and two hemerythrin-like binuclear-iron centers per dimer.

Its subcellular location is the cytoplasm. Exhibits NADH peroxidase activity (in vitro). The chain is Nigerythrin (ngr) from Nitratidesulfovibrio vulgaris (strain ATCC 29579 / DSM 644 / CCUG 34227 / NCIMB 8303 / VKM B-1760 / Hildenborough) (Desulfovibrio vulgaris).